The primary structure comprises 61 residues: MAKSKNHTNHNQNKKAHRNGIKRPQKHRYDSLKYRDAKFRRNQKFANRGTVEAIRQAKASA.

The span at 1–26 (MAKSKNHTNHNQNKKAHRNGIKRPQK) shows a compositional bias: basic residues. Residues 1-32 (MAKSKNHTNHNQNKKAHRNGIKRPQKHRYDSL) are disordered.

Belongs to the eukaryotic ribosomal protein eL29 family. As to quaternary structure, component of the large ribosomal subunit (LSU). Mature yeast ribosomes consist of a small (40S) and a large (60S) subunit. The 40S small subunit contains 1 molecule of ribosomal RNA (18S rRNA) and at least 33 different proteins. The large 60S subunit contains 3 rRNA molecules (25S, 5.8S and 5S rRNA) and at least 46 different proteins.

Its subcellular location is the cytoplasm. The protein localises to the nucleus. It localises to the nucleolus. Component of the ribosome, a large ribonucleoprotein complex responsible for the synthesis of proteins in the cell. The small ribosomal subunit (SSU) binds messenger RNAs (mRNAs) and translates the encoded message by selecting cognate aminoacyl-transfer RNA (tRNA) molecules. The large subunit (LSU) contains the ribosomal catalytic site termed the peptidyl transferase center (PTC), which catalyzes the formation of peptide bonds, thereby polymerizing the amino acids delivered by tRNAs into a polypeptide chain. The nascent polypeptides leave the ribosome through a tunnel in the LSU and interact with protein factors that function in enzymatic processing, targeting, and the membrane insertion of nascent chains at the exit of the ribosomal tunnel. The polypeptide is Large ribosomal subunit protein eL29 (rpl29) (Schizosaccharomyces pombe (strain 972 / ATCC 24843) (Fission yeast)).